We begin with the raw amino-acid sequence, 214 residues long: Cell division protein SepF (214 aa).

Positions 23 to 70 (YYDDRAPSRGFPRPRFDDGYGRYDGDDYDDPRREPADCPPPAGYRGGY) are disordered. Basic and acidic residues predominate over residues 36 to 58 (PRFDDGYGRYDGDDYDDPRREPA).

This sequence belongs to the SepF family. Homodimer. Interacts with FtsZ.

The protein localises to the cytoplasm. In terms of biological role, cell division protein that is part of the divisome complex and is recruited early to the Z-ring. Probably stimulates Z-ring formation, perhaps through the cross-linking of FtsZ protofilaments. Its function overlaps with FtsA. This Mycolicibacterium paratuberculosis (strain ATCC BAA-968 / K-10) (Mycobacterium paratuberculosis) protein is Cell division protein SepF.